A 338-amino-acid chain; its full sequence is MYG1 protein YER156C (338 aa).

The protein belongs to the MYG1 family.

The protein is MYG1 protein YER156C of Saccharomyces cerevisiae (strain ATCC 204508 / S288c) (Baker's yeast).